The chain runs to 352 residues: Anthranilate phosphoribosyltransferase (352 aa).

5-phospho-alpha-D-ribose 1-diphosphate-binding positions include Gly83, 86–87, Thr91, 93–96, 111–119, and Ala123; these read GD, NIST, and KHGGRSVSS. Gly83 contacts anthranilate. Ser95 provides a ligand contact to Mg(2+). Arg169 provides a ligand contact to anthranilate. Mg(2+) contacts are provided by Asp228 and Glu229.

Belongs to the anthranilate phosphoribosyltransferase family. In terms of assembly, homodimer. Mg(2+) is required as a cofactor.

The catalysed reaction is N-(5-phospho-beta-D-ribosyl)anthranilate + diphosphate = 5-phospho-alpha-D-ribose 1-diphosphate + anthranilate. It participates in amino-acid biosynthesis; L-tryptophan biosynthesis; L-tryptophan from chorismate: step 2/5. Its function is as follows. Catalyzes the transfer of the phosphoribosyl group of 5-phosphorylribose-1-pyrophosphate (PRPP) to anthranilate to yield N-(5'-phosphoribosyl)-anthranilate (PRA). In Neisseria meningitidis serogroup A / serotype 4A (strain DSM 15465 / Z2491), this protein is Anthranilate phosphoribosyltransferase.